The primary structure comprises 152 residues: Large ribosomal subunit protein bL9 (152 aa).

The protein belongs to the bacterial ribosomal protein bL9 family.

Functionally, binds to the 23S rRNA. This Mycobacterium avium (strain 104) protein is Large ribosomal subunit protein bL9.